Consider the following 691-residue polypeptide: Dynamin-1-like protein (691 aa).

In terms of domain architecture, Dynamin-type G spans 22–301 (IIQLPQIAVV…LMHHIRDCLP (280 aa)). The interval 32–39 (GTQSSGKS) is G1 motif. 32-40 (GTQSSGKSS) contacts GTP. A G2 motif region spans residues 58–60 (VTR). Residues 145 to 148 (DLPG) are G3 motif. The G4 motif stretch occupies residues 214–217 (TKLD). Residues 214 to 220 (TKLDLMD) and 245 to 248 (NRSQ) contribute to the GTP site. The tract at residues 244–247 (VNRS) is G5 motif. Positions 343-488 (YCNTIEGTAK…NEMVHNLVAI (146 aa)) are middle domain. 2 stretches are compositionally biased toward basic and acidic residues: residues 522–531 (LPTSVPRDKM) and 551–563 (KKGD…EKTK). The interval 522-573 (LPTSVPRDKMAGGAQAEQEGGTGTWRGMLKKGDEGQGEEKTKLQSSIPASPQ) is disordered. The 92-residue stretch at 599 to 690 (CEVIERLIKS…VIAEIRETHL (92 aa)) folds into the GED domain. Residues 609-623 (YFLIVRKNIQDSVPK) are important for homodimerization.

This sequence belongs to the TRAFAC class dynamin-like GTPase superfamily. Dynamin/Fzo/YdjA family. Homotetramer; dimerizes through the N-terminal GTP-middle region of one molecule binding to the GED domain of another DNM1L molecule. Oligomerizes in a GTP-dependent manner to form membrane-associated tubules with a spiral pattern.

Its subcellular location is the cytoplasm. The protein resides in the cytosol. The protein localises to the golgi apparatus. It localises to the endomembrane system. It is found in the mitochondrion outer membrane. Its subcellular location is the peroxisome. The protein resides in the membrane. The protein localises to the clathrin-coated pit. It localises to the cytoplasmic vesicle. It is found in the secretory vesicle. Its subcellular location is the synaptic vesicle membrane. It catalyses the reaction GTP + H2O = GDP + phosphate + H(+). Its function is as follows. Functions in mitochondrial and peroxisomal division. Mediates membrane fission through oligomerization into membrane-associated tubular structures that wrap around the scission site to constrict and sever the mitochondrial membrane through a GTP hydrolysis-dependent mechanism. The specific recruitment at scission sites is mediated by membrane receptors like MFF, MIEF1 and MIEF2 for mitochondrial membranes. While the recruitment by the membrane receptors is GTP-dependent, the following hydrolysis of GTP induces the dissociation from the receptors and allows DNM1L filaments to curl into closed rings that are probably sufficient to sever a double membrane. May play a role in the circadian control of mitochondrial ATP production. The sequence is that of Dynamin-1-like protein from Danio rerio (Zebrafish).